The primary structure comprises 123 residues: Cliotide T4 (123 aa).

An N-terminal signal peptide occupies residues 1–28 (MASLRIAPLALFFFLAASVMFTVEKTEA). Positions 29-58 (GIPCGESCVFIPCITAAIGCSCKSKVCYRN) form a cross-link, cyclopeptide (Gly-Asn). 3 disulfide bridges follow: Cys-32/Cys-48, Cys-36/Cys-50, and Cys-41/Cys-55. The propeptide at 59–123 (HVIAAEAKTM…KDHLKMSITN (65 aa)) is removed in mature form.

Contains 3 disulfide bonds. Post-translationally, this is a cyclic peptide. As to expression, expressed in flower, stem, shoot, root, leaf, seed, pod and nodule (at protein level).

Functionally, probably participates in a plant defense mechanism. Active against Gram-negative bacteria E.coli ATCC 700926 (MIC=1.0 uM), K.pneumoniae ATTC 13883 (MIC=5.5 uM) and P.aeruginosa ATCC 39018 (MIC=7.5 uM). Has hemolytic and cytotoxic activity. This chain is Cliotide T4, found in Clitoria ternatea (Butterfly pea).